A 518-amino-acid chain; its full sequence is MTLAEFWPLCLRRLHDMLPQGQFAQWIAPLTVGEEGGVWVVYGKNQFACNMLKSQFAGKIEAVREELAAGRSAFVFKPGEGVRYEMAAVEGAVEPAEPSLHAVSEGMPVQEVLLDELPSEEPVKPAASKTAADILAERMKNLPHEPRQAAGSASRPESVAVAKARTDVQRDAEEARYEQTNLSPDYTFDTLVEGKGNRLAAAAAQAIAESPGQSYNPFFLYGSTGLGKTHLVQAVGNELLKNRPDAKVRYMHSDDYIRSFMKAVRNNTYDVFKQQYKQYDLLIIDDIQFIKGKDRTMEEFFYLYNHFHNEKKQLILTCDVLPAKIEGMDDRLKSRFSWGLTLELEPPELEMRIAILQKKAEAAGISIEDEAALFIANLIRSNVRELEGAFNRVGASSRFMNRPVIDIDLARTALQDIIAEKHKVITADIIIDAVAKYYRIKISDVLGKKRTRNIARPRQVAMSLTKELTTLSLPSIGDSFGGRDHTTVMHGIRAVAKLREEDPELAQDYEKLLILIQN.

The domain I, interacts with DnaA modulators stretch occupies residues 1 to 72 (MTLAEFWPLC…VREELAAGRS (72 aa)). Positions 72–180 (SAFVFKPGEG…DAEEARYEQT (109 aa)) are domain II. Residues 145 to 172 (EPRQAAGSASRPESVAVAKARTDVQRDA) are disordered. A domain III, AAA+ region region spans residues 181–397 (NLSPDYTFDT…GAFNRVGASS (217 aa)). Positions 225, 227, 228, and 229 each coordinate ATP. The tract at residues 398–518 (RFMNRPVIDI…YEKLLILIQN (121 aa)) is domain IV, binds dsDNA.

It belongs to the DnaA family. As to quaternary structure, oligomerizes as a right-handed, spiral filament on DNA at oriC.

The protein localises to the cytoplasm. Functionally, plays an essential role in the initiation and regulation of chromosomal replication. ATP-DnaA binds to the origin of replication (oriC) to initiate formation of the DNA replication initiation complex once per cell cycle. Binds the DnaA box (a 9 base pair repeat at the origin) and separates the double-stranded (ds)DNA. Forms a right-handed helical filament on oriC DNA; dsDNA binds to the exterior of the filament while single-stranded (ss)DNA is stabiized in the filament's interior. The ATP-DnaA-oriC complex binds and stabilizes one strand of the AT-rich DNA unwinding element (DUE), permitting loading of DNA polymerase. After initiation quickly degrades to an ADP-DnaA complex that is not apt for DNA replication. Binds acidic phospholipids. This chain is Chromosomal replication initiator protein DnaA, found in Neisseria meningitidis serogroup B (strain ATCC BAA-335 / MC58).